We begin with the raw amino-acid sequence, 215 residues long: Pyridoxine/pyridoxamine 5'-phosphate oxidase (215 aa).

Residues 8 to 11 (RQEY) and Lys-66 each bind substrate. FMN-binding positions include 61–66 (RIVLLK), 76–77 (YT), Arg-82, Lys-83, and Gln-105. 2 residues coordinate substrate: Tyr-123 and Arg-127. FMN contacts are provided by residues 140–141 (QS) and Trp-186. 192–194 (RLH) is a binding site for substrate. Arg-196 lines the FMN pocket.

Belongs to the pyridoxamine 5'-phosphate oxidase family. As to quaternary structure, homodimer. It depends on FMN as a cofactor.

It carries out the reaction pyridoxamine 5'-phosphate + O2 + H2O = pyridoxal 5'-phosphate + H2O2 + NH4(+). It catalyses the reaction pyridoxine 5'-phosphate + O2 = pyridoxal 5'-phosphate + H2O2. It functions in the pathway cofactor metabolism; pyridoxal 5'-phosphate salvage; pyridoxal 5'-phosphate from pyridoxamine 5'-phosphate: step 1/1. Its pathway is cofactor metabolism; pyridoxal 5'-phosphate salvage; pyridoxal 5'-phosphate from pyridoxine 5'-phosphate: step 1/1. Catalyzes the oxidation of either pyridoxine 5'-phosphate (PNP) or pyridoxamine 5'-phosphate (PMP) into pyridoxal 5'-phosphate (PLP). This Salinibacter ruber (strain DSM 13855 / M31) protein is Pyridoxine/pyridoxamine 5'-phosphate oxidase.